Consider the following 178-residue polypeptide: Major urinary protein 4 (178 aa).

The signal sequence occupies residues M1–A16. C80 and C173 are disulfide-bonded.

This sequence belongs to the calycin superfamily. Lipocalin family. Expressed in lacrimal gland, parotid gland, sublingual gland, nasal mucus, and vomeronasal organ.

The protein localises to the secreted. In terms of biological role, binds pheromones, likely to displace pheromones complexed to urinary MUPs and transport them to the vomeronasal organ (VNO) where they associate with their neuronal receptor(s). MUP4 is highly specific for the male mouse pheromone 2-sec-butyl-4,5-dihydrothiazole (SBT). This is Major urinary protein 4 (Mup4) from Mus musculus (Mouse).